A 472-amino-acid chain; its full sequence is MLKIYNTLTRQKEEFHPQQAGIVNMYVCGPTVYNYIHIGNARSVVAFDTVRRYLEFSGYQVNYVSNFTDVDDKMIKAAKEQGITVPELAYKYIQAYMEDTAALNVEPATTHPRATENIDGIISFIEDLIEKGYAYQSGGDVYYRARKFAHYGQLSGQSLDDLEVGASEHVSTEEVAKKKDPLDFALWKAAKPGEIKWDSPWGAGRPGWHIECSVMSTKYLGDTLDIHAGGQDLEFPHHENEIAQSEAKTGHRFVNYWMHNGFVTIGRDNEKMSKSLGNFVTVHDLIKEVDPQVLRFFMSTTQYRRPIQYSQESLVEAQANLEHLKNTYDNLAYRLKDATSGTDGGVQRQLADFRARFVAAMDDDINVQNGIAVVYELMRFANQYVEQRLVQREPIVAIQLMLKRLVAVFGVDLAVSATEINDEKIKELIEKRNAARAEKDFALSDQIRDQLRDQGIILEDTPQGTRYRKESN.

Position 28 (cysteine 28) interacts with Zn(2+). Residues 30-40 (PTVYNYIHIGN) carry the 'HIGH' region motif. 3 residues coordinate Zn(2+): cysteine 212, histidine 237, and glutamate 241. The 'KMSKS' region motif lies at 271 to 275 (KMSKS). An ATP-binding site is contributed by lysine 274.

It belongs to the class-I aminoacyl-tRNA synthetase family. Monomer. The cofactor is Zn(2+).

The protein resides in the cytoplasm. The catalysed reaction is tRNA(Cys) + L-cysteine + ATP = L-cysteinyl-tRNA(Cys) + AMP + diphosphate. The protein is Cysteine--tRNA ligase of Limosilactobacillus fermentum (strain NBRC 3956 / LMG 18251) (Lactobacillus fermentum).